A 770-amino-acid polypeptide reads, in one-letter code: Lysine-specific histone demethylase 1 (770 aa).

The disordered stretch occupies residues 1 to 21 (MSSDTGSEYLDEEIRGDELGP). The region spanning 28–126 (LAAAASAARL…FGRYVRSTKI (99 aa)) is the SWIRM domain. An FAD-binding site is contributed by 137-165 (VIVIGAGAAGISAATQLESFGFDVIVLEA). The interval 718–739 (NEAVADIPNAPNAPNAQKPEEI) is disordered.

It belongs to the flavin monoamine oxidase family. In terms of assembly, probably part of a large repressor complex. Interacts with CoREST protein spr-1. Interacts with chromobox protein homolog hpl-1. It depends on FAD as a cofactor.

The protein localises to the nucleus. It carries out the reaction N(6),N(6)-dimethyl-L-lysyl(4)-[histone H3] + 2 A + 2 H2O = L-lysyl(4)-[histone H3] + 2 formaldehyde + 2 AH2. Functionally, histone demethylase that specifically demethylates 'Lys-4' of histone H3, a specific tag for epigenetic transcriptional activation, thereby acting as a corepressor. Acts by oxidizing the substrate by FAD to generate the corresponding imine that is subsequently hydrolyzed. Demethylates both mono- and di-methylated 'Lys-4' of histone H3. May be involved in H3 demethylation in mitotic cells including gut and embryonic cells. Participates in the transcriptional repression of the presenilin protein hop-1. May act via the formation of a multiprotein complex that remodel or modify the chromatin. Together with met-2, set-17 and set-26, required for transgenerational fertility. Plays a role in developmental growth and lifespan regulation in response to ultraviolet-induced damage. The polypeptide is Lysine-specific histone demethylase 1 (Caenorhabditis elegans).